Consider the following 184-residue polypeptide: Oligoribonuclease (184 aa).

In terms of domain architecture, Exonuclease spans 7 to 170 (LIWIDLEMTG…DDIRESVAEL (164 aa)). Tyr-128 is a catalytic residue.

This sequence belongs to the oligoribonuclease family.

It is found in the cytoplasm. 3'-to-5' exoribonuclease specific for small oligoribonucleotides. This Baumannia cicadellinicola subsp. Homalodisca coagulata protein is Oligoribonuclease.